The chain runs to 385 residues: Basigin (385 aa).

Residues 1 to 21 (MAAALFVLLGFALLGTHGASG) form the signal peptide. Positions 37–120 (GGSVELHCEA…SNDPDRNHLT (84 aa)) constitute an Ig-like domain. Disulfide bonds link cysteine 44/cysteine 108, cysteine 157/cysteine 203, and cysteine 242/cysteine 301. Positions 138–219 (EPGTVFTTVE…MGTANIQLHG (82 aa)) constitute an Ig-like C2-type domain. Residues 138 to 323 (EPGTVFTTVE…ITLRVRSHLA (186 aa)) are Extracellular-facing. Asparagine 160 is a glycosylation site (N-linked (GlcNAc...) asparagine). The essential for interaction with KDR/VEGFR2 stretch occupies residues 195–199 (DDQWG). Positions 221 to 315 (PRVKAVKSSE…SKGSDQAIIT (95 aa)) constitute an Ig-like V-type domain. Residues asparagine 268 and asparagine 302 are each glycosylated (N-linked (GlcNAc...) asparagine). The chain crosses the membrane as a helical span at residues 324-344 (ALWPFLGIVAEVLVLVTIIFI). Residues 345-385 (YEKRRKPEDVLDDDDAGSAPLKSSGQHQNDKGKNVRQRNSS) are Cytoplasmic-facing. The interval 353–385 (DVLDDDDAGSAPLKSSGQHQNDKGKNVRQRNSS) is disordered. Serine 362 and serine 368 each carry phosphoserine.

In terms of assembly, homooligomer. Interacts with NXNL1. Interacts with SLC2A1 and SLC16A1/GLUT1. Interacts with XKR8; promoting its localization at the cell membrane. (Microbial infection) Interacts with P.falciparum (isolate 3D7) RH5/PfRH5; the interaction is required for the invasion of the host erythrocytes by the parasite at the merozoite stage. As to quaternary structure, homooligomer. Forms heterooligomers with isoform 3. Interacts with VEGFA and KDR/VEGFR2. Interacts with PPIA/CYPA. Interacts with PPIL2; regulates BSG transport to the cell membrane. Interacts with SLC16A1; interaction mediates SLC16A3 targeting to the plasma membrane. Interacts with SLC16A12. Interacts with SLC16A11. Interacts with AJAP1. Interacts with SLC1A3, ATP1B2, MAG and L1CAM. Interacts with SLC16A3; interaction mediates SLC16A3 targeting to the plasma membrane. In terms of assembly, (Microbial infection) Interacts with P.falciparum (isolates 3D7 or 7G8) RH5/PfRH5; the interaction is required for the invasion of the host erythrocytes by the parasite at the merozoite stage. (Microbial infection) Does not interact with severe acute respiratory syndrome coronavirus 2 (SARS-CoV-2) spike glycoprotein, even if previous works were based on a putative interaction. As to quaternary structure, forms heterooligomers with isoform 2. In terms of assembly, interacts with SLC16A6; this interaction mediates targeting to the plasma membrane. Post-translationally, N-glycosylated. Retina-specific. Expressed in retinal cone photoreceptors (at protein level). As to expression, expressed in erythrocytes (at protein level). Highly expressed in melanoma cell lines (at protein level). Highly expressed in the heart, kidney, skeletal muscle and testis. In terms of tissue distribution, highly expressed in the bone marrow, fetal liver, lung, testis and thymus.

Its subcellular location is the melanosome. It localises to the cell membrane. It is found in the photoreceptor inner segment. The protein localises to the cell projection. The protein resides in the cilium. Its subcellular location is the photoreceptor outer segment. It localises to the endosome. It is found in the endoplasmic reticulum membrane. The protein localises to the basolateral cell membrane. Essential for normal retinal maturation and development. Acts as a retinal cell surface receptor for NXNL1 and plays an important role in NXNL1-mediated survival of retinal cone photoreceptors. In association with glucose transporter SLC16A1/GLUT1 and NXNL1, promotes retinal cone survival by enhancing aerobic glycolysis and accelerating the entry of glucose into photoreceptors. May act as a potent stimulator of IL6 secretion in multiple cell lines that include monocytes. In terms of biological role, (Microbial infection) Erythrocyte receptor for P.falciparum RH5 which is essential for erythrocyte invasion by the merozoite stage of P.falciparum isolates 3D7 and Dd2. Its function is as follows. Signaling receptor for cyclophilins, essential for PPIA/CYPA and PPIB/CYPB-dependent signaling related to chemotaxis and adhesion of immune cells. Plays an important role in targeting monocarboxylate transporters SLC16A1/GLUT1, SLC16A11 and SLC16A12 to the plasma membrane. Acts as a coreceptor for vascular endothelial growth factor receptor 2 (KDR/VEGFR2) in endothelial cells enhancing its VEGFA-mediated activation and downstream signaling. Promotes angiogenesis through EPAS1/HIF2A-mediated up-regulation of VEGFA (isoform VEGF-165 and VEGF-121) and KDR/VEGFR2 in endothelial cells. Plays a key role in regulating tumor growth, invasion, metastasis and neoangiogenesis by stimulating the production and release of extracellular matrix metalloproteinases and KDR/VEGFR2 by both tumor cells and stromal cells (fibroblasts and endothelial cells). Functionally, (Microbial infection) Erythrocyte receptor for P.falciparum RH5 which is essential for erythrocyte invasion by the merozoite stage of P.falciparum isolates 3D7, Dd2, 7G8 and HB3. Binding of P.falciparum RH5 results in BSG dimerization which triggers an increase in intracellular Ca(2+) in the erythrocyte. This essential step leads to a rearrangement of the erythrocyte cytoskeleton required for the merozoite invasion. (Microbial infection) Can facilitate human SARS coronavirus (SARS-CoV-1) infection via its interaction with virus-associated PPIA/CYPA. In terms of biological role, (Microbial infection) Can facilitate HIV-1 infection via its interaction with virus-associated PPIA/CYPA. Its function is as follows. (Microbial infection) First described as a receptor for severe acute respiratory syndrome coronavirus 2 (SARS-CoV-2), it is not required for SARS-CoV-2 infection. Functionally, (Microbial infection) Acts as a receptor for measles virus. (Microbial infection) Promotes entry of pentamer-expressing human cytomegalovirus (HCMV) into epithelial and endothelial cells. In Homo sapiens (Human), this protein is Basigin.